A 203-amino-acid chain; its full sequence is Small ribosomal subunit protein uS4 (203 aa).

An S4 RNA-binding domain is found at 93–153 (RRLDNVVYRL…EKSKNLQQVK (61 aa)).

It belongs to the universal ribosomal protein uS4 family. Part of the 30S ribosomal subunit. Contacts protein S5. The interaction surface between S4 and S5 is involved in control of translational fidelity.

In terms of biological role, one of the primary rRNA binding proteins, it binds directly to 16S rRNA where it nucleates assembly of the body of the 30S subunit. With S5 and S12 plays an important role in translational accuracy. In Lactobacillus delbrueckii subsp. bulgaricus (strain ATCC 11842 / DSM 20081 / BCRC 10696 / JCM 1002 / NBRC 13953 / NCIMB 11778 / NCTC 12712 / WDCM 00102 / Lb 14), this protein is Small ribosomal subunit protein uS4.